Reading from the N-terminus, the 360-residue chain is GDSL esterase/lipase At1g06990 (360 aa).

A signal peptide spans 1–22; sequence MLIHVIIFMIITTMQFSTTCHA. 2 N-linked (GlcNAc...) asparagine glycosylation sites follow: Asn-26 and Asn-31. Ser-44 acts as the Nucleophile in catalysis. 3 N-linked (GlcNAc...) asparagine glycosylation sites follow: Asn-73, Asn-126, and Asn-272. Catalysis depends on residues Asp-335 and His-338.

It belongs to the 'GDSL' lipolytic enzyme family.

Its subcellular location is the secreted. This Arabidopsis thaliana (Mouse-ear cress) protein is GDSL esterase/lipase At1g06990.